Reading from the N-terminus, the 222-residue chain is uncharacterized protein (222 aa).

This is an uncharacterized protein from Homo sapiens (Human).